A 277-amino-acid polypeptide reads, in one-letter code: uncharacterized protein (277 aa).

A disordered region spans residues 1 to 20 (MVTTSPPPTLTNSVQPHPTT).

This is an uncharacterized protein from Acidianus convivator (ATV).